A 120-amino-acid polypeptide reads, in one-letter code: Small ribosomal subunit protein uS13 (120 aa).

The tract at residues 93–120 is disordered; it reads GLPVRGQNTKNNARTRKGPRRTVANKKK. Residues 105 to 120 are compositionally biased toward basic residues; it reads ARTRKGPRRTVANKKK.

This sequence belongs to the universal ribosomal protein uS13 family. Part of the 30S ribosomal subunit. Has been shown to cross-link to S19 forming a loose heterodimer. Forms two bridges to the 50S subunit in the 70S ribosome.

In terms of biological role, located at the top of the head of the 30S subunit, it contacts several helices of the 16S rRNA. In the 70S ribosome it contacts the 23S rRNA (bridge B1a) and protein L5 of the 50S subunit (bridge B1b), connecting the 2 subunits; these bridges are implicated in subunit movement. Contacts the tRNA in the A and P-sites. The protein is Small ribosomal subunit protein uS13 (rpsM) of Geobacillus stearothermophilus (Bacillus stearothermophilus).